The chain runs to 70 residues: Biotin carboxyl carrier protein of acetyl-CoA carboxylase (70 aa).

The Biotinyl-binding domain occupies 1–69 (GTVVAPMVGL…QDGIKLFALK (69 aa)). K35 carries the N6-biotinyllysine modification.

The protein localises to the plastid. It localises to the chloroplast. It functions in the pathway lipid metabolism; fatty acid biosynthesis. This protein is a component of the acetyl coenzyme A carboxylase complex; first, biotin carboxylase catalyzes the carboxylation of the carrier protein and then the transcarboxylase transfers the carboxyl group to form malonyl-CoA. The polypeptide is Biotin carboxyl carrier protein of acetyl-CoA carboxylase (Solanum lycopersicum (Tomato)).